The primary structure comprises 152 residues: Large ribosomal subunit protein uL15 (152 aa).

Positions 1–56 (MELNTLKPAKNSVKQNTRYGRGQGSGKGGTSTRGHKGAKSRSGYKSKPGFEGGQLP) are disordered. The segment covering 21–31 (RGQGSGKGGTS) has biased composition (gly residues). Residues 33-44 (RGHKGAKSRSGY) show a composition bias toward basic residues.

It belongs to the universal ribosomal protein uL15 family. As to quaternary structure, part of the 50S ribosomal subunit.

In terms of biological role, binds to the 23S rRNA. This chain is Large ribosomal subunit protein uL15, found in Amoebophilus asiaticus (strain 5a2).